Reading from the N-terminus, the 237-residue chain is MAIYLTELDSKSLDFPPAENALADPNGLLAFGGDLTPERLIAAYHHGIFPWYGPGEPILWWSPSTRAVFDPNTFLPAKSLKKFQRKAQYQVSINHATPEVIKLCGNTRPAEETWLNEEMQAAYISLALQGVCHSVEVWQDQRLIGGFYGLSIGELFCGESMFSLETNASKIALWYFCRHFSEHGGKLIDCQVMNSHLHSLGAFTLPREEFLQRLLCLKQQRVTSGCFSPQWLKRHNA.

Belongs to the L/F-transferase family.

It localises to the cytoplasm. The catalysed reaction is N-terminal L-lysyl-[protein] + L-leucyl-tRNA(Leu) = N-terminal L-leucyl-L-lysyl-[protein] + tRNA(Leu) + H(+). It carries out the reaction N-terminal L-arginyl-[protein] + L-leucyl-tRNA(Leu) = N-terminal L-leucyl-L-arginyl-[protein] + tRNA(Leu) + H(+). It catalyses the reaction L-phenylalanyl-tRNA(Phe) + an N-terminal L-alpha-aminoacyl-[protein] = an N-terminal L-phenylalanyl-L-alpha-aminoacyl-[protein] + tRNA(Phe). Functionally, functions in the N-end rule pathway of protein degradation where it conjugates Leu, Phe and, less efficiently, Met from aminoacyl-tRNAs to the N-termini of proteins containing an N-terminal arginine or lysine. This Vibrio vulnificus (strain CMCP6) protein is Leucyl/phenylalanyl-tRNA--protein transferase (aat).